A 121-amino-acid chain; its full sequence is Replication protein A 14 kDa subunit (121 aa).

V2 is subject to N-acetylvaline. Residues K23, K39, and K88 each participate in a glycyl lysine isopeptide (Lys-Gly) (interchain with G-Cter in ubiquitin) cross-link.

The protein belongs to the replication factor A protein 3 family. In terms of assembly, component of the canonical replication protein A complex (RPA), a heterotrimer composed of RPA1, RPA2 and RPA3. Also a component of the aRPA, the alternative replication protein A complex, a trimeric complex similar to the replication protein A complex/RPA but where RPA1 and RPA3 are associated with RPA4 instead of RPA2. Interacts with BRIP1/FANCJ via the RPA1 subunit; following DNA damage they colocalize in foci in the nucleus. In terms of processing, ubiquitinated by RFWD3 at stalled replication forks in response to DNA damage: ubiquitination by RFWD3 does not lead to degradation by the proteasome and promotes removal of the RPA complex from stalled replication forks, promoting homologous recombination.

It is found in the nucleus. Its function is as follows. As part of the heterotrimeric replication protein A complex (RPA/RP-A), binds and stabilizes single-stranded DNA intermediates that form during DNA replication or upon DNA stress. It prevents their reannealing and in parallel, recruits and activates different proteins and complexes involved in DNA metabolism. Thereby, it plays an essential role both in DNA replication and the cellular response to DNA damage. In the cellular response to DNA damage, the RPA complex controls DNA repair and DNA damage checkpoint activation. Through recruitment of ATRIP activates the ATR kinase a master regulator of the DNA damage response. It is required for the recruitment of the DNA double-strand break repair factors RAD51 and RAD52 to chromatin, in response to DNA damage. Also recruits to sites of DNA damage proteins like XPA and XPG that are involved in nucleotide excision repair and is required for this mechanism of DNA repair. Also plays a role in base excision repair (BER), probably through interaction with UNG. RPA stimulates 5'-3' helicase activity of BRIP1/FANCJ. Also recruits SMARCAL1/HARP, which is involved in replication fork restart, to sites of DNA damage. May also play a role in telomere maintenance. RPA3 has its own single-stranded DNA-binding activity and may be responsible for polarity of the binding of the complex to DNA. As part of the alternative replication protein A complex, aRPA, binds single-stranded DNA and probably plays a role in DNA repair. Compared to the RPA2-containing, canonical RPA complex, may not support chromosomal DNA replication and cell cycle progression through S-phase. The aRPA may not promote efficient priming by DNA polymerase alpha but could support DNA synthesis by polymerase delta in presence of PCNA and replication factor C (RFC), the dual incision/excision reaction of nucleotide excision repair and RAD51-dependent strand exchange. This is Replication protein A 14 kDa subunit (RPA3) from Homo sapiens (Human).